A 124-amino-acid polypeptide reads, in one-letter code: Protein MGF 110-8L (124 aa).

Residues 1-16 (MKVLILVLLAVVILQA) form the signal peptide. Asn76 and Asn94 each carry an N-linked (GlcNAc...) asparagine; by host glycan.

The protein belongs to the asfivirus MGF 110 family.

Plays a role in virus cell tropism, and may be required for efficient virus replication in macrophages. This is Protein MGF 110-8L from Ornithodoros (relapsing fever ticks).